We begin with the raw amino-acid sequence, 208 residues long: CKLF-like MARVEL transmembrane domain-containing protein 4 (208 aa).

Over residues 1–11 the composition is skewed to acidic residues; that stretch reads MRGGEELDGFE. The tract at residues 1–38 is disordered; sequence MRGGEELDGFEGEASSTSMISGASSPYQPTTEPVSQRR. A compositionally biased stretch (low complexity) spans 15–25; it reads SSTSMISGASS. The MARVEL domain occupies 49–176; the sequence is YLRGALGRLK…STFLAMQKWR (128 aa). A run of 4 helical transmembrane segments spans residues 59–79, 85–105, 123–143, and 151–171; these read VAQVILALIAFICIETIMECS, YFFEFVSCSAFVVTGVLLILF, LVNTGLSTFFFFIASIVLAAL, and IAAVIFGFLATAAYAVSTFLA. At S194 the chain carries Phosphoserine.

The protein belongs to the chemokine-like factor family. In terms of assembly, interacts with PD1L1 and CMTM6.

The protein resides in the membrane. Acts as a backup for CMTM6 to regulate plasma membrane expression of PD-L1/CD274, an immune inhibitory ligand critical for immune tolerance to self and antitumor immunity. May protect PD-L1/CD274 from being polyubiquitinated and targeted for degradation. The sequence is that of CKLF-like MARVEL transmembrane domain-containing protein 4 from Mus musculus (Mouse).